The primary structure comprises 406 residues: Peptide antibiotic transporter SbmA (406 aa).

Residues 1–11 (MFKSFFPKPGT) lie on the Periplasmic side of the membrane. A helical membrane pass occupies residues 12-32 (FFLSAFVWALIAVIFWQAGGG). At 33–56 (DWVARITGASGQIPISAARFWSLD) the chain is on the cytoplasmic side. A helical transmembrane segment spans residues 57 to 77 (FLIFYAYYIVCVGLFALFWFI). Residues 78–87 (YSPHRWQYWS) lie on the Periplasmic side of the membrane. Residues 88–108 (ILGTALIIFVTWFLVEVGVAV) form a helical membrane-spanning segment. The Cytoplasmic segment spans residues 109–137 (NAWYAPFYDLIQTALSSPHKVTIEQFYRE). Residues 138-158 (VGVFLGIALIAVVISVLNNFF) traverse the membrane as a helical segment. Over 159 to 205 (VSHYVFRWRTAMNEYYMANWQQLRHIEGAAQRVQEDTMRFASTLENM) the chain is Periplasmic. The helical transmembrane segment at 206–226 (GVSFINAIMTLIAFLPVLVTL) threads the bilayer. The Cytoplasmic portion of the chain corresponds to 227 to 242 (SAHVPELPIIGHIPYG). Residues 243 to 263 (LVIAAIVWSLMGTGLLAVVGI) traverse the membrane as a helical segment. Topologically, residues 264 to 331 (KLPGLEFKNQ…ARILYLQVDN (68 aa)) are periplasmic. A helical membrane pass occupies residues 332-352 (VFGLFLLFPSIVAGTITLGLM). Residues 353–406 (TQITNVFGQVRGAFQYLINSWTTLVELMSIYKRLRSFEHELDGDKIQEVTHTLS) are Cytoplasmic-facing.

It belongs to the peptide uptake permease (PUP) (TC 9.A.18) family.

Its subcellular location is the cell inner membrane. Its function is as follows. Uptake of antimicrobial peptides. This is Peptide antibiotic transporter SbmA (sbmA) from Escherichia coli O157:H7.